The chain runs to 692 residues: DNA ligase (692 aa).

NAD(+) contacts are provided by residues 35 to 39, 88 to 89, and Glu117; these read DLVYD and SL. Lys119 acts as the N6-AMP-lysine intermediate in catalysis. NAD(+) contacts are provided by Arg140, Glu176, Lys301, and Lys325. Residues Cys416, Cys419, Cys434, and Cys439 each coordinate Zn(2+). Positions 611 to 692 constitute a BRCT domain; the sequence is LTNQSNSWAS…FDLIKNSKKT (82 aa).

This sequence belongs to the NAD-dependent DNA ligase family. LigA subfamily. The cofactor is Mg(2+). Mn(2+) serves as cofactor.

The catalysed reaction is NAD(+) + (deoxyribonucleotide)n-3'-hydroxyl + 5'-phospho-(deoxyribonucleotide)m = (deoxyribonucleotide)n+m + AMP + beta-nicotinamide D-nucleotide.. Functionally, DNA ligase that catalyzes the formation of phosphodiester linkages between 5'-phosphoryl and 3'-hydroxyl groups in double-stranded DNA using NAD as a coenzyme and as the energy source for the reaction. It is essential for DNA replication and repair of damaged DNA. The polypeptide is DNA ligase (Mesomycoplasma hyopneumoniae (strain J / ATCC 25934 / NCTC 10110) (Mycoplasma hyopneumoniae)).